The chain runs to 514 residues: Intracellular exo-alpha-L-arabinofuranosidase (514 aa).

The alpha-L-arabinofuranose site is built by Glu-47 and Asn-194. Glu-195 acts as the Proton donor/acceptor in catalysis. The alpha-L-arabinofuranose site is built by Tyr-261, Glu-317, and Gln-366. Glu-317 (nucleophile) is an active-site residue.

Belongs to the glycosyl hydrolase 51 family. As to quaternary structure, homohexamer; trimer of dimers.

It is found in the cytoplasm. It carries out the reaction Hydrolysis of terminal non-reducing alpha-L-arabinofuranoside residues in alpha-L-arabinosides.. It functions in the pathway glycan metabolism; L-arabinan degradation. Involved in the degradation of arabinan and is a key enzyme in the complete degradation of the plant cell wall. Catalyzes the cleavage of terminal alpha-L-arabinofuranosyl residues in different hemicellulosic homopolysaccharides (branched and debranched arabinans) and heteropolysaccharides (arabinoxylans). This is Intracellular exo-alpha-L-arabinofuranosidase (asdII) from Bacteroides ovatus.